Here is a 392-residue protein sequence, read N- to C-terminus: 8-amino-7-oxononanoate synthase (392 aa).

Arg19 is a binding site for substrate. Residue 106–107 (GY) participates in pyridoxal 5'-phosphate binding. His131 is a binding site for substrate. Positions 176, 204, and 233 each coordinate pyridoxal 5'-phosphate. At Lys236 the chain carries N6-(pyridoxal phosphate)lysine. Residue Thr350 coordinates substrate.

This sequence belongs to the class-II pyridoxal-phosphate-dependent aminotransferase family. BioF subfamily. As to quaternary structure, homodimer. It depends on pyridoxal 5'-phosphate as a cofactor.

The catalysed reaction is 6-carboxyhexanoyl-[ACP] + L-alanine + H(+) = (8S)-8-amino-7-oxononanoate + holo-[ACP] + CO2. It participates in cofactor biosynthesis; biotin biosynthesis. Catalyzes the decarboxylative condensation of pimeloyl-[acyl-carrier protein] and L-alanine to produce 8-amino-7-oxononanoate (AON), [acyl-carrier protein], and carbon dioxide. The chain is 8-amino-7-oxononanoate synthase from Pseudomonas fluorescens (strain ATCC BAA-477 / NRRL B-23932 / Pf-5).